The chain runs to 276 residues: Large ribosomal subunit protein uL2 (276 aa).

Residues 224-276 form a disordered region; sequence AMNPIDHPHGGGEGKTSGGRNPVTPWGVPTKGKKTRKRNKSSNKYIKRVSDKG. The span at 254 to 270 shows a compositional bias: basic residues; that stretch reads KGKKTRKRNKSSNKYIK.

This sequence belongs to the universal ribosomal protein uL2 family. As to quaternary structure, part of the 50S ribosomal subunit. Forms a bridge to the 30S subunit in the 70S ribosome.

In terms of biological role, one of the primary rRNA binding proteins. Required for association of the 30S and 50S subunits to form the 70S ribosome, for tRNA binding and peptide bond formation. It has been suggested to have peptidyltransferase activity; this is somewhat controversial. Makes several contacts with the 16S rRNA in the 70S ribosome. This chain is Large ribosomal subunit protein uL2, found in Ehrlichia canis (strain Jake).